Consider the following 455-residue polypeptide: MDSLSIVILAAGKGKRMYSSLPKVLHPIGGEPMLARVIRTARALNPSRLVVVYGHGGEQVRARIQDADIVWAEQAEQLGTGHALKMALPHLPQDGKTLVLYGDVPLTKASTLQRLEQAAAGGMAVLTDVLADASGYGRMVRGADGKLQAIVEHKDCTPEQLAIREINTGMMALPNARLADWLSALNNGNAQGEYYLTDVLELAVKDGVAVESASVDASWEAAGVNNKVQLAELERILQANQARALLEAGVTLADPARIDIRGELKHGMDVSIDIGCVFEGAVELGDQVEIGAHCVLKNVKIASGTRIAPFSHLEDAVVGAECRIGPYARLRPGAELAGHVHIGNFVEVKKSKIGEGSKVNHLSYVGDAEIGRKVNVGAGSVTCNYDGVNKFKTIIGDNVFVGSGTLMVAPVKLERDSTIGAGSVISKDTPAGELTVARARQVTVPGWKRPQKKSG.

The pyrophosphorylase stretch occupies residues 1-227; sequence MDSLSIVILA…SWEAAGVNNK (227 aa). Residues 9–12, Lys23, Gln74, 79–80, 101–103, Gly137, Glu152, Asn167, and Asn225 contribute to the UDP-N-acetyl-alpha-D-glucosamine site; these read LAAG, GT, and YGD. Residue Asp103 participates in Mg(2+) binding. Position 225 (Asn225) interacts with Mg(2+). The tract at residues 228–248 is linker; it reads VQLAELERILQANQARALLEA. Positions 249 to 455 are N-acetyltransferase; that stretch reads GVTLADPARI…GWKRPQKKSG (207 aa). Residues Arg331 and Lys349 each contribute to the UDP-N-acetyl-alpha-D-glucosamine site. Residue His361 is the Proton acceptor of the active site. Residues Tyr364 and Asn375 each coordinate UDP-N-acetyl-alpha-D-glucosamine. Acetyl-CoA is bound by residues Ala378, 384–385, Ser403, Ala421, and Arg438; that span reads NY.

The protein in the N-terminal section; belongs to the N-acetylglucosamine-1-phosphate uridyltransferase family. It in the C-terminal section; belongs to the transferase hexapeptide repeat family. As to quaternary structure, homotrimer. It depends on Mg(2+) as a cofactor.

The protein localises to the cytoplasm. The catalysed reaction is alpha-D-glucosamine 1-phosphate + acetyl-CoA = N-acetyl-alpha-D-glucosamine 1-phosphate + CoA + H(+). It carries out the reaction N-acetyl-alpha-D-glucosamine 1-phosphate + UTP + H(+) = UDP-N-acetyl-alpha-D-glucosamine + diphosphate. Its pathway is nucleotide-sugar biosynthesis; UDP-N-acetyl-alpha-D-glucosamine biosynthesis; N-acetyl-alpha-D-glucosamine 1-phosphate from alpha-D-glucosamine 6-phosphate (route II): step 2/2. It participates in nucleotide-sugar biosynthesis; UDP-N-acetyl-alpha-D-glucosamine biosynthesis; UDP-N-acetyl-alpha-D-glucosamine from N-acetyl-alpha-D-glucosamine 1-phosphate: step 1/1. The protein operates within bacterial outer membrane biogenesis; LPS lipid A biosynthesis. Catalyzes the last two sequential reactions in the de novo biosynthetic pathway for UDP-N-acetylglucosamine (UDP-GlcNAc). The C-terminal domain catalyzes the transfer of acetyl group from acetyl coenzyme A to glucosamine-1-phosphate (GlcN-1-P) to produce N-acetylglucosamine-1-phosphate (GlcNAc-1-P), which is converted into UDP-GlcNAc by the transfer of uridine 5-monophosphate (from uridine 5-triphosphate), a reaction catalyzed by the N-terminal domain. This chain is Bifunctional protein GlmU, found in Chromobacterium violaceum (strain ATCC 12472 / DSM 30191 / JCM 1249 / CCUG 213 / NBRC 12614 / NCIMB 9131 / NCTC 9757 / MK).